The following is a 152-amino-acid chain: Globin-1 subunit beta (152 aa).

At serine 2 the chain carries N-acetylserine. A Globin domain is found at 12–152; the sequence is VSNADQKDLL…SLVAVVQAAL (141 aa). 2 residues coordinate heme b: histidine 72 and histidine 104.

It belongs to the globin family. In terms of assembly, heterotetramer of two alpha chains and two beta chains.

This Anadara trapezia (Sydney cockle) protein is Globin-1 subunit beta.